The chain runs to 689 residues: DNA ligase (689 aa).

NAD(+)-binding positions include 40-44, 89-90, and E121; these read DSEYD and SL. The active-site N6-AMP-lysine intermediate is K123. NAD(+) contacts are provided by R144, E179, K295, and K319. Zn(2+) contacts are provided by C413, C416, C431, and C437. The BRCT domain maps to 610-689; sequence REQSSLTDKI…EEWLTLIKNV (80 aa).

The protein belongs to the NAD-dependent DNA ligase family. LigA subfamily. The cofactor is Mg(2+). Requires Mn(2+) as cofactor.

It carries out the reaction NAD(+) + (deoxyribonucleotide)n-3'-hydroxyl + 5'-phospho-(deoxyribonucleotide)m = (deoxyribonucleotide)n+m + AMP + beta-nicotinamide D-nucleotide.. DNA ligase that catalyzes the formation of phosphodiester linkages between 5'-phosphoryl and 3'-hydroxyl groups in double-stranded DNA using NAD as a coenzyme and as the energy source for the reaction. It is essential for DNA replication and repair of damaged DNA. This chain is DNA ligase, found in Rickettsia rickettsii (strain Iowa).